Consider the following 577-residue polypeptide: Anthranilate synthase alpha subunit 1, chloroplastic (577 aa).

The transit peptide at 1–34 (MASLVLSLRIAPSTPPLGLGGGRFRGRRGAVACR) directs the protein to the chloroplast.

It belongs to the anthranilate synthase component I family. As to quaternary structure, heterotetramer consisting of two non-identical subunits: a beta subunit and a large alpha subunit.

Its subcellular location is the plastid. It localises to the chloroplast. It catalyses the reaction chorismate + L-glutamine = anthranilate + pyruvate + L-glutamate + H(+). The protein operates within amino-acid biosynthesis; L-tryptophan biosynthesis; L-tryptophan from chorismate: step 1/5. With respect to regulation, feedback inhibition by tryptophan. Functionally, part of a heterotetrameric complex that catalyzes the two-step biosynthesis of anthranilate, an intermediate in the biosynthesis of L-tryptophan. In the first step, the glutamine-binding beta subunit of anthranilate synthase (AS) provides the glutamine amidotransferase activity which generates ammonia as a substrate that, along with chorismate, is used in the second step, catalyzed by the large alpha subunit of AS to produce anthranilate. The protein is Anthranilate synthase alpha subunit 1, chloroplastic (ASA1) of Oryza sativa subsp. indica (Rice).